A 470-amino-acid chain; its full sequence is uncharacterized protein (470 aa).

Positions 418–453 form a coiled coil; it reads SECCEEQEEKEKKKEKEKEKKKEKDDDDDQQNNNNN. Residues 423-470 are disordered; it reads EQEEKEKKKEKEKEKKKEKDDDDDQQNNNNNDQNGLGLGLGLNFGLNL. Positions 426 to 441 are enriched in basic and acidic residues; sequence EKEKKKEKEKEKKKEK. The span at 448–457 shows a compositional bias: low complexity; sequence QNNNNNDQNG.

This is an uncharacterized protein from Acidianus bottle-shaped virus (isolate Italy/Pozzuoli) (ABV).